Here is a 768-residue protein sequence, read N- to C-terminus: Solute carrier family 45 member 4 (768 aa).

Positions 1-32 (MKMAPQNADPESMQVQELSVPLPDPQKAGGAE) are disordered. Transmembrane regions (helical) follow at residues 63–83 (EFCY…IGLP), 86–106 (YYSL…PLIG), 123–143 (ILAL…GSAI), 155–175 (PIGI…ADAT), 196–216 (LNIH…LGGL), and 233–253 (VLFF…LFSI). Disordered stretches follow at residues 259 to 284 (SPQQ…PAFP) and 379 to 419 (NEAK…RHAF). Phosphoserine occurs at positions 424 and 454. The segment at 460 to 489 (DMQKRQRQHRHRNQSGATTSSGDTESEEGE) is disordered. The span at 473-482 (QSGATTSSGD) shows a compositional bias: low complexity. Ser-485 is subject to Phosphoserine. Helical transmembrane passes span 518-538 (TWFS…QVIF), 560-580 (MGCW…ALLQ), 592-612 (VIYV…AMFP), 614-634 (VYVA…ISYC), 666-686 (ILSC…GGVV), and 695-715 (IPMV…FLVI). The interval 726 to 768 (EQKGLSSPLAGEGRAGGNSEKPTVLKLTRKEGLQGPVETESVV) is disordered. A Phosphoserine modification is found at Ser-732.

It belongs to the glycoside-pentoside-hexuronide (GPH) cation symporter transporter (TC 2.A.2) family.

The protein resides in the membrane. The enzyme catalyses sucrose(out) + H(+)(out) = sucrose(in) + H(+)(in). Proton-associated sucrose transporter. May be able to transport also glucose and fructose. The chain is Solute carrier family 45 member 4 from Homo sapiens (Human).